Reading from the N-terminus, the 95-residue chain is Aspartyl/glutamyl-tRNA(Asn/Gln) amidotransferase subunit C (95 aa).

This sequence belongs to the GatC family. As to quaternary structure, heterotrimer of A, B and C subunits.

The enzyme catalyses L-glutamyl-tRNA(Gln) + L-glutamine + ATP + H2O = L-glutaminyl-tRNA(Gln) + L-glutamate + ADP + phosphate + H(+). It catalyses the reaction L-aspartyl-tRNA(Asn) + L-glutamine + ATP + H2O = L-asparaginyl-tRNA(Asn) + L-glutamate + ADP + phosphate + 2 H(+). Its function is as follows. Allows the formation of correctly charged Asn-tRNA(Asn) or Gln-tRNA(Gln) through the transamidation of misacylated Asp-tRNA(Asn) or Glu-tRNA(Gln) in organisms which lack either or both of asparaginyl-tRNA or glutaminyl-tRNA synthetases. The reaction takes place in the presence of glutamine and ATP through an activated phospho-Asp-tRNA(Asn) or phospho-Glu-tRNA(Gln). This chain is Aspartyl/glutamyl-tRNA(Asn/Gln) amidotransferase subunit C, found in Caulobacter sp. (strain K31).